The following is a 493-amino-acid chain: FAD-linked oxidoreductase tazL (493 aa).

Positions 1–17 are cleaved as a signal peptide; the sequence is MRSNTVILAALPLVASA. N29, N41, N53, N91, N253, N318, and N387 each carry an N-linked (GlcNAc...) asparagine glycan. An FAD-binding PCMH-type domain is found at 63-235; sequence WAEPTFAVTI…TSATYEIFDA (173 aa).

Belongs to the oxygen-dependent FAD-linked oxidoreductase family.

It participates in secondary metabolite biosynthesis. In terms of biological role, FAD-linked oxidoreductase; part of the gene cluster that mediates the biosynthesis of azaterrilone A and other azaphilones, a class of fungal metabolites characterized by a highly oxygenated pyrano-quinone bicyclic core and exhibiting a broad range of bioactivities. The first step of the pathway begins with the non-reducing polyketide synthase tazA that assembles one acetyl-CoA starter unit, five malonyl-CoA units, and catalyzes a series of Claisen condensations, methylation, PT-mediated cyclization, and finally releases the first hexaketide precursor through the R-domain. The tazA product then undergoes reduction on its terminal ketone and the following pyran-ring formation by yet undetermined enzyme(s). Dehydration and enoyl reduction, possibly involving the trans-enoyl reductase tazE leads to the next intermediate. TazD is predicted as an acetyltransferase and might catalyze the acetylation steps leading to the synthesis of azaterrilone A. Azaterrilone A is not the final product of the taz pathway and both the highly reducing polyketide synthase tazB and the dual enzyme tazHJ catalyze late steps of the pathway, leading to the production of the 2 final stereoisomers that contain additional polyketide modification whose structures have still to be determined. This chain is FAD-linked oxidoreductase tazL, found in Aspergillus terreus (strain NIH 2624 / FGSC A1156).